Reading from the N-terminus, the 147-residue chain is Deoxyuridine 5'-triphosphate nucleotidohydrolase (147 aa).

S69, G82, D85, Y88, K93, R137, F142, and G143 together coordinate dUMP.

It belongs to the dUTPase family. As to quaternary structure, homotrimer. Mg(2+) is required as a cofactor.

The catalysed reaction is dUTP + H2O = dUMP + diphosphate + H(+). It functions in the pathway pyrimidine metabolism; dUMP biosynthesis; dUMP from dCTP (dUTP route): step 2/2. Involved in nucleotide metabolism via production of dUMP, the immediate precursor of thymidine nucleotides, and decreases the intracellular concentration of dUTP so that uracil cannot be incorporated into DNA. Shows a significant activity against dITP, another potentially mutagenic nucleotide. This Saccharomyces cerevisiae (strain ATCC 204508 / S288c) (Baker's yeast) protein is Deoxyuridine 5'-triphosphate nucleotidohydrolase.